The following is a 280-amino-acid chain: Thioredoxin-related transmembrane protein 1 (280 aa).

Positions 1 to 26 (MAPSGSLAVPLAVLVLLLWGAPWTHG) are cleaved as a signal peptide. Residues 27–132 (RRSNVRVITD…FINFISDKEW (106 aa)) form the Thioredoxin domain. The Extracellular portion of the chain corresponds to 27–180 (RRSNVRVITD…EDLGLPVWGS (154 aa)). Active-site nucleophile residues include cysteine 56 and cysteine 59. Cysteine 56 and cysteine 59 form a disulfide bridge. Residues 181-203 (YTVFALATLFSGLLLGLCMIFVA) form a helical membrane-spanning segment. The Cytoplasmic portion of the chain corresponds to 204-280 (DCLCPSKRRR…LGPSLATDKS (77 aa)). 2 S-palmitoyl cysteine lipidation sites follow: cysteine 205 and cysteine 207. Positions 218–280 (PYPSKKLLSE…LGPSLATDKS (63 aa)) are disordered. Residues serine 228, serine 247, serine 270, serine 274, and serine 280 each carry the phosphoserine modification. Acidic residues predominate over residues 237-252 (EEQEADEEDVSEEEAE).

As to quaternary structure, interacts with ATP2A2. In terms of processing, palmitoylated; palmitoylation is required for localization to mitochondria-associated endoplasmic reticulum membrane (MAM). Ubiquitous. Highly expressed in kidney, liver, placenta and lung.

It is found in the endoplasmic reticulum membrane. The protein resides in the mitochondrion membrane. Its subcellular location is the secreted. The enzyme catalyses Catalyzes the rearrangement of -S-S- bonds in proteins.. Functionally, thiredoxin domain-containing protein that participates in various redox reactions through the reversible oxidation of its active center dithiol to a disulfide and catalyze dithiol-disulfide exchange reactions. Acts as a key inhibitor of the alternative triglyceride biosynthesis pathway by inhibiting the activity of TMEM68/DIESL at the endoplasmic reticulum, thereby restricting accumulation of triacylglycerol. The alternative triglyceride biosynthesis pathway mediates formation of triacylglycerol from diacylglycerol and membrane phospholipids. Acts as a protein disulfide isomerase by catalyzing formation or reduction of disulfide bonds. Specifically mediates formation of disulfide bonds of transmembrane proteins at the endoplasmic reticulum membrane. Involved in endoplasmic reticulum-associated degradation (ERAD) via its protein disulfide isomerase activity by acting on folding-defective polypeptides at the endoplasmic reticulum membrane. Acts as a negative regulator of platelet aggregation following secretion in the extracellular space. Acts as a regulator of endoplasmic reticulum-mitochondria contact sites via its ability to regulate redox signals. Regulates endoplasmic reticulum-mitochondria Ca(2+) flux. This Homo sapiens (Human) protein is Thioredoxin-related transmembrane protein 1.